The chain runs to 642 residues: Threonine--tRNA ligase (642 aa).

In terms of domain architecture, TGS spans 1-61; that stretch reads MPIITLPDGS…EEDASLEIIT (61 aa). Positions 244–535 are catalytic; that stretch reads DHRKIGKQLD…LIEEYAGFFP (292 aa). Zn(2+)-binding residues include cysteine 335, histidine 386, and histidine 512.

The protein belongs to the class-II aminoacyl-tRNA synthetase family. In terms of assembly, homodimer. Requires Zn(2+) as cofactor.

It localises to the cytoplasm. It carries out the reaction tRNA(Thr) + L-threonine + ATP = L-threonyl-tRNA(Thr) + AMP + diphosphate + H(+). Functionally, catalyzes the attachment of threonine to tRNA(Thr) in a two-step reaction: L-threonine is first activated by ATP to form Thr-AMP and then transferred to the acceptor end of tRNA(Thr). Also edits incorrectly charged L-seryl-tRNA(Thr). This is Threonine--tRNA ligase from Vibrio parahaemolyticus serotype O3:K6 (strain RIMD 2210633).